We begin with the raw amino-acid sequence, 144 residues long: Large ribosomal subunit protein uL14 (144 aa).

This sequence belongs to the universal ribosomal protein uL14 family. In terms of assembly, part of the 50S ribosomal subunit. Forms a cluster with proteins L3 and L24e, part of which may contact the 16S rRNA in 2 intersubunit bridges.

Its function is as follows. Binds to 23S rRNA. Forms part of two intersubunit bridges in the 70S ribosome. The polypeptide is Large ribosomal subunit protein uL14 (Caldivirga maquilingensis (strain ATCC 700844 / DSM 13496 / JCM 10307 / IC-167)).